The chain runs to 340 residues: Guanine nucleotide-binding protein G(I)/G(S)/G(T) subunit beta-2 (340 aa).

The residue at position 2 (S2) is an N-acetylserine. WD repeat units follow at residues 53 to 83 (GHLAKIYAMHWGTDSRLLVSASQDGKLIIWD), 95 to 125 (LRSSWVMTCAYAPSGNFVACGGLDNICSIYS), 141 to 170 (GHTGYLSCCRFLDDNQIITSSGDTTCALWD), 182 to 212 (GHSGDVMSLSLAPDGRTFVSGACDASIKLWD), 224 to 254 (GHESDINAVAFFPNGYAFTTGSDDATCRLFD), 268 to 298 (NIICGITSVAFSRSGRLLLAGYDDFNCNIWD), and 310 to 340 (GHDNRVSCLGVTDDGMAVATGSWDSFLKIWN). At Y239 the chain carries Phosphotyrosine.

The protein belongs to the WD repeat G protein beta family. G proteins are composed of 3 units, alpha, beta and gamma. In this context, interacts with GNAI2 and GNG2. Interacts with ARHGEF18 and RASD2. Interacts with ATXN10. Interacts with SCN8A. In terms of tissue distribution, expressed in all cardiac subcompartments and in the brain, with highest levels in the atrioventricular node and brain.

It is found in the cytoplasm. The protein localises to the perinuclear region. It localises to the cell membrane. In terms of biological role, guanine nucleotide-binding proteins (G proteins) are involved as a modulator or transducer in various transmembrane signaling systems. The beta and gamma chains are required for the GTPase activity, for replacement of GDP by GTP, and for G protein-effector interaction. The protein is Guanine nucleotide-binding protein G(I)/G(S)/G(T) subunit beta-2 (GNB2) of Homo sapiens (Human).